A 171-amino-acid chain; its full sequence is Large ribosomal subunit protein bL9 (171 aa).

Belongs to the bacterial ribosomal protein bL9 family.

Functionally, binds to the 23S rRNA. In Rickettsia typhi (strain ATCC VR-144 / Wilmington), this protein is Large ribosomal subunit protein bL9.